The sequence spans 228 residues: Thymidine kinase (228 aa).

23–30 (GNIGCGKS) lines the ATP pocket. The active-site Proton acceptor is the Glu50. Substrate is bound by residues Tyr68, Gln79, and Phe109. Residue Arg157 coordinates ATP.

This sequence belongs to the DCK/DGK family.

It catalyses the reaction thymidine + ATP = dTMP + ADP + H(+). This chain is Thymidine kinase (TK), found in Ictaluridae (bullhead catfishes).